Reading from the N-terminus, the 174-residue chain is Probable carboxylesterase Culp5 (174 aa).

Catalysis depends on S67, which acts as the Nucleophile. C137 and C144 are disulfide-bonded. D141 is an active-site residue. H153 acts as the Proton donor/acceptor in catalysis.

This sequence belongs to the cutinase family.

Does not exhibit cutinase activity. The sequence is that of Probable carboxylesterase Culp5 from Mycobacterium tuberculosis (strain ATCC 25618 / H37Rv).